The following is a 21-amino-acid chain: Venom nerve growth factor Bco12 (21 aa).

It belongs to the NGF-beta family. Homodimer; non-covalently linked. In terms of processing, glycosylated. Expressed by the venom gland.

The protein localises to the secreted. Its function is as follows. Nerve growth factor is important for the development and maintenance of the sympathetic and sensory nervous systems. It stimulates division and differentiation of sympathetic and embryonic sensory neurons as well as basal forebrain cholinergic neurons in the brain. Its relevance in the snake venom is not clear. However, it has been shown to inhibit metalloproteinase-dependent proteolysis of platelet glycoprotein Ib alpha, suggesting a metalloproteinase inhibition to prevent metalloprotease autodigestion and/or protection against prey proteases. Binds a lipid between the two protein chains in the homodimer. The lipid-bound form promotes histamine relase from mouse mast cells, contrary to the lipid-free form. The protein is Venom nerve growth factor Bco12 of Bothrops cotiara (Cotiara).